A 244-amino-acid chain; its full sequence is Cell division protein ZapD (244 aa).

Belongs to the ZapD family. As to quaternary structure, interacts with FtsZ.

It localises to the cytoplasm. Functionally, cell division factor that enhances FtsZ-ring assembly. Directly interacts with FtsZ and promotes bundling of FtsZ protofilaments, with a reduction in FtsZ GTPase activity. In Shewanella baltica (strain OS223), this protein is Cell division protein ZapD.